Here is a 391-residue protein sequence, read N- to C-terminus: Ferrochelatase (391 aa).

Fe cation contacts are provided by H196 and E281.

This sequence belongs to the ferrochelatase family.

Its subcellular location is the cytoplasm. It catalyses the reaction heme b + 2 H(+) = protoporphyrin IX + Fe(2+). It functions in the pathway porphyrin-containing compound metabolism; protoheme biosynthesis; protoheme from protoporphyrin-IX: step 1/1. In terms of biological role, catalyzes the ferrous insertion into protoporphyrin IX. The sequence is that of Ferrochelatase from Prochlorococcus marinus (strain MIT 9515).